The primary structure comprises 322 residues: Olfactory receptor 1J1 (322 aa).

Residues 1–25 are Extracellular-facing; that stretch reads MSPENQSSVSEFLLLGLPIRPEQQA. Asn5 carries N-linked (GlcNAc...) asparagine glycosylation. Residues 26 to 49 traverse the membrane as a helical segment; that stretch reads VFFALFLGMYLTTVLGNLLIMLLI. Over 50-57 the chain is Cytoplasmic; the sequence is QLDSHLHT. A helical membrane pass occupies residues 58 to 79; that stretch reads PMYFFLSHLALTDISFSSVTVP. Residues 80–100 are Extracellular-facing; that stretch reads KMLMNMQTQHLAVFYKGCISQ. A disulfide bridge links Cys97 with Cys189. Residues 101-120 form a helical membrane-spanning segment; sequence TYFFIFFADLDSFLITSMAY. Residues 121–139 are Cytoplasmic-facing; the sequence is DRYVAICHPLHYATIMTQS. The chain crosses the membrane as a helical span at residues 140–158; it reads QCVMLVAGSWVIACACALL. Residues 159–196 are Extracellular-facing; the sequence is HTLLLAQLSFCADHIIPHYFCDLGALLKLSCSDTSLNQ. Residues 197–219 traverse the membrane as a helical segment; that stretch reads LAIFTAALTAIMLPFLCILVSYG. Residues 220 to 236 lie on the Cytoplasmic side of the membrane; the sequence is HIGVTILQIPSTKGICK. The helical transmembrane segment at 237 to 259 threads the bilayer; it reads ALSTCGSHLSVVTIYYRTIIGLY. At 260-272 the chain is on the extracellular side; sequence FLPPSSNTNDKNI. A helical transmembrane segment spans residues 273-292; sequence IASVIYTAVTPMLNPFIYSL. Over 293-322 the chain is Cytoplasmic; the sequence is RNKDIKGALRKLLSRSGAVAHACNLNTLGG.

The protein belongs to the G-protein coupled receptor 1 family.

It localises to the cell membrane. Odorant receptor. The polypeptide is Olfactory receptor 1J1 (Homo sapiens (Human)).